Consider the following 446-residue polypeptide: tRNA-2-methylthio-N(6)-dimethylallyladenosine synthase (446 aa).

An MTTase N-terminal domain is found at 3–120; the sequence is KKIYIKTFGC…LPEMLKQRRS (118 aa). Cys12, Cys49, Cys83, Cys157, Cys161, and Cys164 together coordinate [4Fe-4S] cluster. The region spanning 143–375 is the Radical SAM core domain; it reads KVEGATAFVS…QAVIDQNTRR (233 aa). The TRAM domain maps to 378 to 444; it reads DEMVGTVQRI…AYTLRGEIIV (67 aa).

It belongs to the methylthiotransferase family. MiaB subfamily. Monomer. [4Fe-4S] cluster serves as cofactor.

It localises to the cytoplasm. The catalysed reaction is N(6)-dimethylallyladenosine(37) in tRNA + (sulfur carrier)-SH + AH2 + 2 S-adenosyl-L-methionine = 2-methylsulfanyl-N(6)-dimethylallyladenosine(37) in tRNA + (sulfur carrier)-H + 5'-deoxyadenosine + L-methionine + A + S-adenosyl-L-homocysteine + 2 H(+). Its function is as follows. Catalyzes the methylthiolation of N6-(dimethylallyl)adenosine (i(6)A), leading to the formation of 2-methylthio-N6-(dimethylallyl)adenosine (ms(2)i(6)A) at position 37 in tRNAs that read codons beginning with uridine. In Janthinobacterium sp. (strain Marseille) (Minibacterium massiliensis), this protein is tRNA-2-methylthio-N(6)-dimethylallyladenosine synthase.